The following is a 180-amino-acid chain: Putative 3-methyladenine DNA glycosylase (180 aa).

It belongs to the DNA glycosylase MPG family.

The chain is Putative 3-methyladenine DNA glycosylase from Wolbachia pipientis wMel.